The chain runs to 691 residues: F-box/LRR-repeat protein 5 (691 aa).

The hemerythrin-like stretch occupies residues 1-159; that stretch reads MAPFPEEVDV…IKKKVIAQHC (159 aa). Positions 15, 57, 58, 61, 80, 126, and 130 each coordinate Fe(3+). One can recognise an F-box domain in the interval 202-248; sequence STGITHLPPEVMVSIFSYLNPQELCRCSQVSTKWSQLAKTGSLWKHL. LRR repeat units follow at residues 340–364, 365–392, 393–418, 479–508, 576–607, 608–635, and 636–661; these read SSAV…LDLT, QTDI…DLSG, CEKI…ESGL, VWML…CVME, TRLL…SLSG, CYQI…NLSG, and CLTV…YFYY. 4 residues coordinate [2Fe-2S] cluster: Cys662, Cys676, Cys686, and Cys687.

In terms of assembly, part of a SCF (SKP1-cullin-F-box) protein ligase complex. Interacts with ACO1/IRP1, IREB2/IRP2; the interaction depends on the [2Fe-2S] cluster. Interacts with DCTN1/p150-glued. Requires [2Fe-2S] cluster as cofactor. Polybiquitinated upon iron and oxygen depletion, leading to its degradation by the proteasome. Ubiquitination is regulated by the hemerythrin-like region that acts as an oxygen and iron sensor. Undergoes constitutive ubiquitin-dependent degradation at the steady state by HERC2.

The protein localises to the cytoplasm. Its subcellular location is the perinuclear region. The protein resides in the nucleus. The protein operates within protein modification; protein ubiquitination. With respect to regulation, an iron-sulfur cluster promotes IRP2 polyubiquitination and degradation in response to both iron and oxygen concentrations. Functionally, component of some SCF (SKP1-cullin-F-box) protein ligase complex that plays a central role in iron homeostasis by promoting the ubiquitination and subsequent degradation of IREB2/IRP2. The C-terminal domain of FBXL5 contains a redox-sensitive [2Fe-2S] cluster that, upon oxidation, promotes binding to IRP2 to effect its oxygen-dependent degradation. Under iron deficiency conditions, the N-terminal hemerythrin-like (Hr) region, which contains a diiron metal center, cannot bind iron and undergoes conformational changes that destabilize the FBXL5 protein and cause its ubiquitination and degradation. When intracellular iron levels start rising, the Hr region is stabilized. Additional increases in iron levels facilitate the assembly and incorporation of a redox active [2Fe-2S] cluster in the C-terminal domain. Only when oxygen level is high enough to maintain the cluster in its oxidized state can FBXL5 recruit IRP2 as a substrate for polyubiquination and degradation. Promotes ubiquitination and subsequent degradation of the dynactin complex component DCTN1. Within the nucleus, promotes the ubiquitination of SNAI1; preventing its interaction with DNA and promoting its degradation. Negatively regulates DNA damage response by mediating the ubiquitin-proteasome degradation of the DNA repair protein NABP2. The sequence is that of F-box/LRR-repeat protein 5 (FBXL5) from Bos taurus (Bovine).